The following is a 1085-amino-acid chain: Translation factor GUF1 homolog, mitochondrial (1085 aa).

In terms of domain architecture, tr-type G spans 232-409 (KYIRNFCILA…RIISDIPPPI (178 aa)). Residues 241 to 248 (AHIDSGKS), 302 to 306 (DTPGH), and 356 to 359 (NKID) contribute to the GTP site.

This sequence belongs to the TRAFAC class translation factor GTPase superfamily. Classic translation factor GTPase family. LepA subfamily.

The protein localises to the mitochondrion inner membrane. It catalyses the reaction GTP + H2O = GDP + phosphate + H(+). Its function is as follows. Promotes mitochondrial protein synthesis. May act as a fidelity factor of the translation reaction, by catalyzing a one-codon backward translocation of tRNAs on improperly translocated ribosomes. Binds to mitochondrial ribosomes in a GTP-dependent manner. The protein is Translation factor GUF1 homolog, mitochondrial of Plasmodium falciparum (isolate 3D7).